The following is a 335-amino-acid chain: Anthranilate phosphoribosyltransferase (335 aa).

5-phospho-alpha-D-ribose 1-diphosphate contacts are provided by residues Gly-80, 83-84 (GD), Thr-88, 90-93 (NIST), 108-116 (KHGNRAVSS), and Ser-120. Gly-80 serves as a coordination point for anthranilate. Ser-92 provides a ligand contact to Mg(2+). An anthranilate-binding site is contributed by Asn-111. Anthranilate is bound at residue Arg-166. Asp-225 and Glu-226 together coordinate Mg(2+).

It belongs to the anthranilate phosphoribosyltransferase family. Homodimer. Requires Mg(2+) as cofactor.

The catalysed reaction is N-(5-phospho-beta-D-ribosyl)anthranilate + diphosphate = 5-phospho-alpha-D-ribose 1-diphosphate + anthranilate. It functions in the pathway amino-acid biosynthesis; L-tryptophan biosynthesis; L-tryptophan from chorismate: step 2/5. Catalyzes the transfer of the phosphoribosyl group of 5-phosphorylribose-1-pyrophosphate (PRPP) to anthranilate to yield N-(5'-phosphoribosyl)-anthranilate (PRA). The chain is Anthranilate phosphoribosyltransferase from Clostridium kluyveri (strain NBRC 12016).